A 201-amino-acid chain; its full sequence is LexA repressor 1 (201 aa).

A DNA-binding region (H-T-H motif) is located at residues 28–48 (LREIAAHLKISGTLGVSKHLE). Catalysis depends on for autocatalytic cleavage activity residues Ser-120 and Lys-157.

This sequence belongs to the peptidase S24 family. Homodimer.

It carries out the reaction Hydrolysis of Ala-|-Gly bond in repressor LexA.. Its function is as follows. Represses a number of genes involved in the response to DNA damage (SOS response), including recA and lexA. In the presence of single-stranded DNA, RecA interacts with LexA causing an autocatalytic cleavage which disrupts the DNA-binding part of LexA, leading to derepression of the SOS regulon and eventually DNA repair. The chain is LexA repressor 1 from Geobacter sulfurreducens (strain ATCC 51573 / DSM 12127 / PCA).